The primary structure comprises 305 residues: tRNA-cytidine(32) 2-sulfurtransferase (305 aa).

Positions 1 to 20 (MTAVLPLPHPLADPAPRDPR) are disordered. Residues 59-64 (SGGKDS) carry the PP-loop motif motif. Residues C134, C137, and C225 each contribute to the [4Fe-4S] cluster site. The span at 282–293 (DAPPDLAPDPGA) shows a compositional bias: low complexity. The tract at residues 282-305 (DAPPDLAPDPGAWLTASDATHDSD) is disordered.

It belongs to the TtcA family. As to quaternary structure, homodimer. Requires Mg(2+) as cofactor. The cofactor is [4Fe-4S] cluster.

It localises to the cytoplasm. The enzyme catalyses cytidine(32) in tRNA + S-sulfanyl-L-cysteinyl-[cysteine desulfurase] + AH2 + ATP = 2-thiocytidine(32) in tRNA + L-cysteinyl-[cysteine desulfurase] + A + AMP + diphosphate + H(+). It participates in tRNA modification. Its function is as follows. Catalyzes the ATP-dependent 2-thiolation of cytidine in position 32 of tRNA, to form 2-thiocytidine (s(2)C32). The sulfur atoms are provided by the cysteine/cysteine desulfurase (IscS) system. This chain is tRNA-cytidine(32) 2-sulfurtransferase, found in Xanthomonas oryzae pv. oryzae (strain PXO99A).